The sequence spans 934 residues: Serine/threonine-protein kinase PknD (934 aa).

The Protein kinase domain occupies 4-296 (YELIRLIGKG…ELRQALQPYL (293 aa)). Residues 10–18 (IGKGGMGEV) and lysine 33 contribute to the ATP site. Aspartate 138 functions as the Proton acceptor in the catalytic mechanism.

Belongs to the protein kinase superfamily. Ser/Thr protein kinase family. Interacts with Pkn1. Autophosphorylated on serine and threonine residues. Present in elementary bodies 40 hours post-infection as 2 bands of approximately 55 to 60 and 45 to 50 kDa, which may be due to differential phosphorylation as well as degradation; an enzymatically active full-length protein can also be detected.

The enzyme catalyses L-seryl-[protein] + ATP = O-phospho-L-seryl-[protein] + ADP + H(+). The catalysed reaction is L-threonyl-[protein] + ATP = O-phospho-L-threonyl-[protein] + ADP + H(+). In terms of biological role, together with the serine/threonine kinase Pkn1, may play a role in the specific interactions with host proteins during intracellular growth. Autophosphorylates and also phosphorylates Pkn1. The chain is Serine/threonine-protein kinase PknD from Chlamydia trachomatis serovar L2 (strain ATCC VR-902B / DSM 19102 / 434/Bu).